The following is a 63-amino-acid chain: MKAQDLREKNVEELNEELLNLLREQFNLRMQAATGQLQQTHTLKAVRRDIARVKTLLNEKAGA.

It belongs to the universal ribosomal protein uL29 family.

The sequence is that of Large ribosomal subunit protein uL29 from Aliivibrio fischeri (strain ATCC 700601 / ES114) (Vibrio fischeri).